The chain runs to 253 residues: Uracil-DNA glycosylase (253 aa).

Asp-79 (proton acceptor) is an active-site residue.

This sequence belongs to the uracil-DNA glycosylase (UDG) superfamily. UNG family.

It localises to the cytoplasm. It carries out the reaction Hydrolyzes single-stranded DNA or mismatched double-stranded DNA and polynucleotides, releasing free uracil.. Excises uracil residues from the DNA which can arise as a result of misincorporation of dUMP residues by DNA polymerase or due to deamination of cytosine. The sequence is that of Uracil-DNA glycosylase from Xylella fastidiosa (strain 9a5c).